Here is a 126-residue protein sequence, read N- to C-terminus: Holo-[acyl-carrier-protein] synthase (126 aa).

Residues Asp9 and Glu58 each contribute to the Mg(2+) site.

This sequence belongs to the P-Pant transferase superfamily. AcpS family. The cofactor is Mg(2+).

Its subcellular location is the cytoplasm. It carries out the reaction apo-[ACP] + CoA = holo-[ACP] + adenosine 3',5'-bisphosphate + H(+). Its function is as follows. Transfers the 4'-phosphopantetheine moiety from coenzyme A to a Ser of acyl-carrier-protein. This Aliivibrio salmonicida (strain LFI1238) (Vibrio salmonicida (strain LFI1238)) protein is Holo-[acyl-carrier-protein] synthase.